A 370-amino-acid chain; its full sequence is tRNA-specific 2-thiouridylase MnmA (370 aa).

ATP contacts are provided by residues 25 to 32 and Leu-51; that span reads ALSGGVDS. The Nucleophile role is filled by Cys-112. A disulfide bridge connects residues Cys-112 and Cys-211. Gly-137 serves as a coordination point for ATP. The segment at 161-163 is interaction with tRNA; it reads KDQ. Cys-211 (cysteine persulfide intermediate) is an active-site residue. The segment at 316–317 is interaction with tRNA; the sequence is RY.

This sequence belongs to the MnmA/TRMU family.

The protein resides in the cytoplasm. It carries out the reaction S-sulfanyl-L-cysteinyl-[protein] + uridine(34) in tRNA + AH2 + ATP = 2-thiouridine(34) in tRNA + L-cysteinyl-[protein] + A + AMP + diphosphate + H(+). Its function is as follows. Catalyzes the 2-thiolation of uridine at the wobble position (U34) of tRNA, leading to the formation of s(2)U34. The chain is tRNA-specific 2-thiouridylase MnmA from Synechococcus sp. (strain JA-3-3Ab) (Cyanobacteria bacterium Yellowstone A-Prime).